A 309-amino-acid chain; its full sequence is Porphobilinogen deaminase (309 aa).

The residue at position 241 (Cys241) is an S-(dipyrrolylmethanemethyl)cysteine.

It belongs to the HMBS family. As to quaternary structure, monomer. Requires dipyrromethane as cofactor.

The catalysed reaction is 4 porphobilinogen + H2O = hydroxymethylbilane + 4 NH4(+). It functions in the pathway porphyrin-containing compound metabolism; protoporphyrin-IX biosynthesis; coproporphyrinogen-III from 5-aminolevulinate: step 2/4. Its function is as follows. Tetrapolymerization of the monopyrrole PBG into the hydroxymethylbilane pre-uroporphyrinogen in several discrete steps. This Bacillus thuringiensis (strain Al Hakam) protein is Porphobilinogen deaminase.